The chain runs to 645 residues: Bifurcating [FeFe] hydrogenase alpha subunit (645 aa).

The 2Fe-2S ferredoxin-type domain occupies 1–76 (MKIYVDGREV…GMKVKTNTPE (76 aa)). The [2Fe-2S] cluster site is built by Cys-34, Cys-45, Cys-48, and Cys-60. The 40-residue stretch at 76–115 (EIYEMRRNILELILATHNRDCTTCDRNGSCKLQKYAEDFG) folds into the 4Fe-4S His(Cys)3-ligated-type domain. [4Fe-4S] cluster is bound by residues His-92, Cys-96, Cys-99, Cys-105, Cys-143, Cys-146, Cys-149, Cys-153, Cys-186, Cys-189, Cys-192, Cys-196, Cys-295, Cys-350, Cys-482, and Cys-486. 4Fe-4S ferredoxin-type domains lie at 133–164 (SAPVVRDTSKCILCGDCVRVCEEIQGVGVIEF) and 178–206 (DTPLIETECVLCGQCVAYCPTGALSIRND). Cys-486 provides a ligand contact to Fe(2+). [2Fe-2S] cluster-binding residues include Cys-575, Cys-580, Cys-612, and Cys-616.

Heterotrimer composed of HydA (alpha subunit), HydB (beta subunit) and HydC (gamma subunit). Near neutral and acidic pH conditions favor oligomerization of the heterotrimeric holoenzyme. The cofactor is [2Fe-2S] cluster. It depends on [4Fe-4S] cluster as a cofactor. Fe(2+) serves as cofactor.

It localises to the cytoplasm. It carries out the reaction 2 H2 + 2 oxidized [2Fe-2S]-[ferredoxin] + NAD(+) = 2 reduced [2Fe-2S]-[ferredoxin] + NADH + 3 H(+). In terms of biological role, catalyzes the oxidation of the physiological electron carriers NADH and reduced ferredoxin, coupled to the production of H(2). Acts as a bifurcating [FeFe] hydrogenase, which uses the exergonic oxidation of reduced ferredoxin to drive the unfavorable oxidation of NADH to produce H(2). The alpha subunit contains the catalytic H-cluster. This Thermotoga maritima (strain ATCC 43589 / DSM 3109 / JCM 10099 / NBRC 100826 / MSB8) protein is Bifurcating [FeFe] hydrogenase alpha subunit.